The following is a 113-amino-acid chain: Large ribosomal subunit protein bL19 (113 aa).

Belongs to the bacterial ribosomal protein bL19 family.

Functionally, this protein is located at the 30S-50S ribosomal subunit interface and may play a role in the structure and function of the aminoacyl-tRNA binding site. This chain is Large ribosomal subunit protein bL19, found in Nocardia farcinica (strain IFM 10152).